The primary structure comprises 180 residues: Thiol:disulfide interchange protein TxlA homolog (180 aa).

The chain crosses the membrane as a helical span at residues 10–26 (LLAVVAIALSAAVYLGF). Positions 34-143 (SLEAQAQRAI…LEQNITALVA (110 aa)) constitute a Thioredoxin domain. Cys-64 and Cys-67 are joined by a disulfide.

It belongs to the thioredoxin family.

It is found in the cell membrane. Required for disulfide bond formation in some proteins. Acts by transferring its disulfide bond to other proteins and is reduced in the process. In Synechocystis sp. (strain ATCC 27184 / PCC 6803 / Kazusa), this protein is Thiol:disulfide interchange protein TxlA homolog (txlA).